The chain runs to 179 residues: Alkyl hydroperoxide reductase AhpD (179 aa).

Catalysis depends on cysteine 130, which acts as the Proton donor. Cysteine 130 and cysteine 133 form a disulfide bridge. Residue cysteine 133 is the Cysteine sulfenic acid (-SOH) intermediate of the active site.

Belongs to the AhpD family. Homotrimer.

The enzyme catalyses N(6)-[(R)-dihydrolipoyl]-L-lysyl-[lipoyl-carrier protein] + a hydroperoxide = N(6)-[(R)-lipoyl]-L-lysyl-[lipoyl-carrier protein] + an alcohol + H2O. Antioxidant protein with alkyl hydroperoxidase activity. Required for the reduction of the AhpC active site cysteine residues and for the regeneration of the AhpC enzyme activity. This Rhodococcus erythropolis (strain PR4 / NBRC 100887) protein is Alkyl hydroperoxide reductase AhpD.